The sequence spans 636 residues: Multicopper oxidase CTB12 (636 aa).

The N-terminal stretch at 1 to 23 is a signal peptide; sequence MWSVRLYPLALTLLFQCVSPAAA. The Plastocyanin-like 1 domain occupies 62–168; that stretch reads AGIGFREAIF…LYGAVVIAPD (107 aa). Cu cation-binding residues include His104 and His106. N-linked (GlcNAc...) asparagine glycosylation is present at Asn136. 2 residues coordinate Cu cation: His148 and His150. The N-linked (GlcNAc...) asparagine glycan is linked to Asn304. The Plastocyanin-like 2 domain maps to 318–381; sequence LTFVNPGGLY…QEKARHVVRV (64 aa). A glycan (N-linked (GlcNAc...) asparagine) is linked at Asn472. In terms of domain architecture, Plastocyanin-like 3 spans 486–613; sequence NVEDVPATEL…GGMGMVVLDG (128 aa). His519, His522, and His524 together coordinate Cu cation. N-linked (GlcNAc...) asparagine glycosylation occurs at Asn576. Cu cation is bound by residues His595, Cys596, His597, and His601.

This sequence belongs to the multicopper oxidase family.

Its pathway is mycotoxin biosynthesis. In terms of biological role, multicopper oxidase; part of the gene cluster that mediates the biosynthesis of cercosporin, a light-activated, non-host-selective toxin. The perylenequinone chromophore of cercosporin absorbs light energy to attain an electronically-activated triplet state and produces active oxygen species such as the hydroxyl radical, superoxide, hydrogen peroxide or singlet oxygen upon reaction with oxygen molecules. These reactive oxygen species cause damage to various cellular components including lipids, proteins and nucleic acids. The first step of cercosporin biosynthesis is performed by the polyketide synthase CTB1 which catalyzes the formation of nor-toralactone. The starter unit acyltransferase (SAT) domain of CTB1 initiates polyketide extension by the selective utilization of acetyl-CoA, which is elongated to the heptaketide in the beta-ketoacyl synthase (KS) domain by successive condensations with six malonyl units introduced by the malonyl acyltransferase (MAT) domain. The product template (PT) domain catalyzes C4-C9 and C2-C11 aldol cyclizations and dehydrations to a trihydroxynaphthalene, which is thought to be delivered to the thioesterase (TE) domain for product release. The bifunctional enzyme CTB3 then methylates nor-toralactone to toralactone before conducting an unusual oxidative aromatic ring opening. The O-methyltransferase CTB2 further methylates the nascent OH-6 of the CBT3 product, blocking further oxidation at this site before the reductase CTB6 reduces the 2-oxopropyl ketone at position C7, giving naphthalene. The FAD-dependent monooxygenase CTB5 in concert with the multicopper oxidase CTB12 are responsible for homodimerization of naphthalene with CTB7 installing the dioxepine moiety, finally producing cercosporin. The fasciclin domain-containing protein CTB11 might act with CTB5 and CTB12 whereas the roles of CTB9 and CTB10 have still to be elucidated. In Cercospora beticola (Sugarbeet leaf spot fungus), this protein is Multicopper oxidase CTB12.